Reading from the N-terminus, the 481-residue chain is 3-isopropylmalate dehydratase large subunit (481 aa).

Residues C355, C415, and C418 each coordinate [4Fe-4S] cluster.

Belongs to the aconitase/IPM isomerase family. LeuC type 1 subfamily. As to quaternary structure, heterodimer of LeuC and LeuD. [4Fe-4S] cluster is required as a cofactor.

The catalysed reaction is (2R,3S)-3-isopropylmalate = (2S)-2-isopropylmalate. The protein operates within amino-acid biosynthesis; L-leucine biosynthesis; L-leucine from 3-methyl-2-oxobutanoate: step 2/4. Functionally, catalyzes the isomerization between 2-isopropylmalate and 3-isopropylmalate, via the formation of 2-isopropylmaleate. The protein is 3-isopropylmalate dehydratase large subunit of Symbiobacterium thermophilum (strain DSM 24528 / JCM 14929 / IAM 14863 / T).